The sequence spans 369 residues: Putative agmatine deiminase 2 (369 aa).

Catalysis depends on cysteine 356, which acts as the Amidino-cysteine intermediate.

The protein belongs to the agmatine deiminase family.

It carries out the reaction agmatine + H2O = N-carbamoylputrescine + NH4(+). In Listeria monocytogenes serovar 1/2a (strain ATCC BAA-679 / EGD-e), this protein is Putative agmatine deiminase 2.